Here is a 75-residue protein sequence, read N- to C-terminus: MSSGGLLLLLGLLTLWAELTPVSSQDRPKKPGLCPPRPQKPPCVRECKNDWRCPGEQKCCRYGCIYECRDPIFVK.

A signal peptide spans 1–24; it reads MSSGGLLLLLGLLTLWAELTPVSS. The WAP domain occupies 27–72; sequence RPKKPGLCPPRPQKPPCVRECKNDWRCPGEQKCCRYGCIYECRDPI. Intrachain disulfides connect Cys34/Cys60, Cys43/Cys64, Cys47/Cys59, and Cys53/Cys68.

It belongs to the venom waprin family. As to expression, expressed by the venom gland.

The protein localises to the secreted. Its function is as follows. Damages membranes of susceptible bacteria. Has no hemolytic activity. Not toxic to mice. Does not inhibit the proteinases elastase and cathepsin G. The chain is Carwaprin-b from Tropidechis carinatus (Australian rough-scaled snake).